Here is a 45-residue protein sequence, read N- to C-terminus: Small polypeptide DEVIL 2 (45 aa).

The segment at 14 to 45 (SQSRRLGKYLKEQKGRIYIIRRCVMMLLCSHD) is required for DVL/RTFL small polypeptide activity. Residues 17–33 (RRLGKYLKEQKGRIYII) form a helical membrane-spanning segment.

This sequence belongs to the DVL/RTFL small polypeptides family. Mostly expressed in stems and, to a lower extent, in roots and leaves.

The protein localises to the cell membrane. Functionally, small polypeptide acting as a regulatory molecule which coordinates cellular responses required for differentiation, growth and development, including leaves shape, pedicule elongation, inflorescence organization and fruit maturation, probably by restricting polar cell proliferation in lateral organs and coordinating socket cell recruitment and differentiation at trichome sites. This is Small polypeptide DEVIL 2 from Arabidopsis thaliana (Mouse-ear cress).